The following is a 110-amino-acid chain: Putative caspase recruitment domain-containing protein 17P (110 aa).

The 91-residue stretch at 1 to 91 (MADKVLKEKR…HLAGTLGLSA (91 aa)) folds into the CARD domain.

As to quaternary structure, interacts with pro-CASP1. Ubiquitous.

The protein resides in the cytoplasm. Its function is as follows. Regulator of procaspase-1/CASP1 activation implicated in the regulation of the proteolytic maturation of pro-IL-1beta/IL1B and its release during inflammation. Inhibits the release of IL1B in response to LPS in monocytes. However, unlike CASP1, do not induce NF-kappa-B activation. This is Putative caspase recruitment domain-containing protein 17P (CARD17P) from Homo sapiens (Human).